The following is a 168-amino-acid chain: Ribosome maturation factor RimP (168 aa).

It belongs to the RimP family.

Its subcellular location is the cytoplasm. Its function is as follows. Required for maturation of 30S ribosomal subunits. The polypeptide is Ribosome maturation factor RimP (Mycoplasma mobile (strain ATCC 43663 / 163K / NCTC 11711) (Mesomycoplasma mobile)).